The sequence spans 92 residues: Cell division topological specificity factor (92 aa).

Belongs to the MinE family.

Its function is as follows. Prevents the cell division inhibition by proteins MinC and MinD at internal division sites while permitting inhibition at polar sites. This ensures cell division at the proper site by restricting the formation of a division septum at the midpoint of the long axis of the cell. This chain is Cell division topological specificity factor, found in Desulforamulus reducens (strain ATCC BAA-1160 / DSM 100696 / MI-1) (Desulfotomaculum reducens).